The following is a 37-amino-acid chain: Large ribosomal subunit protein bL36 (37 aa).

The protein belongs to the bacterial ribosomal protein bL36 family.

This Rippkaea orientalis (strain PCC 8801 / RF-1) (Cyanothece sp. (strain PCC 8801)) protein is Large ribosomal subunit protein bL36.